Here is a 397-residue protein sequence, read N- to C-terminus: Carbamoyl phosphate synthase small chain (397 aa).

Positions Met-1–Lys-204 are CPSase. The L-glutamine site is built by Ser-53, Gly-256, and Gly-258. The region spanning Lys-208–Glu-395 is the Glutamine amidotransferase type-1 domain. Catalysis depends on Cys-284, which acts as the Nucleophile. L-glutamine is bound by residues Leu-285, Gln-288, Asn-326, Gly-328, and Phe-329. Catalysis depends on residues His-368 and Glu-370.

Belongs to the CarA family. As to quaternary structure, composed of two chains; the small (or glutamine) chain promotes the hydrolysis of glutamine to ammonia, which is used by the large (or ammonia) chain to synthesize carbamoyl phosphate. Tetramer of heterodimers (alpha,beta)4.

The catalysed reaction is hydrogencarbonate + L-glutamine + 2 ATP + H2O = carbamoyl phosphate + L-glutamate + 2 ADP + phosphate + 2 H(+). It catalyses the reaction L-glutamine + H2O = L-glutamate + NH4(+). The protein operates within amino-acid biosynthesis; L-arginine biosynthesis; carbamoyl phosphate from bicarbonate: step 1/1. It participates in pyrimidine metabolism; UMP biosynthesis via de novo pathway; (S)-dihydroorotate from bicarbonate: step 1/3. Small subunit of the glutamine-dependent carbamoyl phosphate synthetase (CPSase). CPSase catalyzes the formation of carbamoyl phosphate from the ammonia moiety of glutamine, carbonate, and phosphate donated by ATP, constituting the first step of 2 biosynthetic pathways, one leading to arginine and/or urea and the other to pyrimidine nucleotides. The small subunit (glutamine amidotransferase) binds and cleaves glutamine to supply the large subunit with the substrate ammonia. This Polynucleobacter asymbioticus (strain DSM 18221 / CIP 109841 / QLW-P1DMWA-1) (Polynucleobacter necessarius subsp. asymbioticus) protein is Carbamoyl phosphate synthase small chain.